Here is a 346-residue protein sequence, read N- to C-terminus: FMRFamide-related peptides type HF-1 (346 aa).

A signal peptide spans 1-19 (MTSLCLTIAPAVLSLICLS). Positions 20–45 (SYGWAEDNNGIHTLDDGDNDPFFRHN) are excised as a propeptide. The residue at position 51 (Phe-51) is a Phenylalanine amide. Positions 54–94 (AFVPLWDNADDSLVRKNLLTHWSEFPLSPALSSSDVFSRNS) are excised as a propeptide. Phe-100 is modified (phenylalanine amide). Residues 103-109 (SYPPYQD) constitute a propeptide that is removed on maturation. The residue at position 115 (Phe-115) is a Phenylalanine amide. Residues 118 to 203 (SHQPDIDEYL…EILSNEDDLE (86 aa)) constitute a propeptide that is removed on maturation. The tract at residues 137 to 185 (YRKRRSEDGDSKEDGLNRVARSADANQQSKNTQSNKFGKDLQKRETKKE) is disordered. A compositionally biased stretch (basic and acidic residues) spans 141–152 (RSEDGDSKEDGL). Polar residues predominate over residues 160–172 (DANQQSKNTQSNK). Over residues 173 to 185 (FGKDLQKRETKKE) the composition is skewed to basic and acidic residues. Phenylalanine amide is present on residues Phe-209 and Phe-216. A propeptide spanning residues 219 to 226 (GDEDESYD) is cleaved from the precursor. Phe-232 carries the post-translational modification Phenylalanine amide. Residues 235–243 (SLRHDQEFE) constitute a propeptide that is removed on maturation. 2 positions are modified to phenylalanine amide: Phe-249 and Phe-256. Residues 259–267 (GDEDDAREE) constitute a propeptide that is removed on maturation. Position 273 is a phenylalanine amide (Phe-273). A propeptide spanning residues 276–283 (SSNEDEDI) is cleaved from the precursor. Phenylalanine amide is present on Phe-290. Positions 293–301 (SGNEDGDVD) are excised as a propeptide. Residues Phe-307 and Phe-314 each carry the phenylalanine amide modification. The propeptide occupies 317 to 325 (SEKEDGDVD). Residues Phe-331 and Phe-338 each carry the phenylalanine amide modification. The propeptide occupies 341–346 (GDSETS).

The protein belongs to the FARP (FMRFamide related peptide) family. As to expression, central nervous system.

It is found in the secreted. Its function is as follows. Can function as both cardioregulatory hormones and transmitters and may regulate cardiovascular function. The protein is FMRFamide-related peptides type HF-1 of Cornu aspersum (Brown garden snail).